The following is a 380-amino-acid chain: MMFSGFNADYEASSSRCSSASPAGDSLSYYHSPADSFSSMGSPVNTQDFCADLSVSSANFIPTVTAISTSPDLQWLVQPTLVSSVAPSQTRAPHPYGLPTQSAGAYARAGMVKTVSGGRAQSIGRRGKVEQLSPEEEEKRRIRRERNKMAAAKCRNRRRELTDTLQAETDQLEDEKSALQTEIANLLKEKEKLEFILAAHRPACKIPDDLGFPEEMSVASLDLTGGLPEASTPESEEAFTLPLLNDPEPKPSLEPVKSISNVELKAEPFDDFLFPASSRPSGSETSRSVPDVDLSGSFYAADWEPLHSNSLGMGPMVTELEPLCTPVVTCTPGCTTYTSSFVFTYPEADSFPSCAAAHRKGSSSNEPSSDSLSSPTLLAL.

2 positions are modified to phosphotyrosine; by SRC: Tyr10 and Tyr30. Residues Lys113 and Lys128 each participate in a glycyl lysine isopeptide (Lys-Gly) (interchain with G-Cter in SUMO2) cross-link. Residues 117-141 (GGRAQSIGRRGKVEQLSPEEEEKRR) form a disordered region. Positions 137–200 (EEKRRIRRER…EKLEFILAAH (64 aa)) constitute a bZIP domain. The interval 139-159 (KRRIRRERNKMAAAKCRNRRR) is basic motif; required for the activation of phospholipid synthesis, but not for CDS1-binding. Residues 165–193 (LQAETDQLEDEKSALQTEIANLLKEKEKL) form a leucine-zipper region. Residue Thr232 is modified to Phosphothreonine. A Glycyl lysine isopeptide (Lys-Gly) (interchain with G-Cter in SUMO); alternate cross-link involves residue Lys265. Lys265 participates in a covalent cross-link: Glycyl lysine isopeptide (Lys-Gly) (interchain with G-Cter in SUMO2); alternate. 2 positions are modified to phosphothreonine; by MAPK1 and MAPK3: Thr325 and Thr331. A disordered region spans residues 354 to 380 (CAAAHRKGSSSNEPSSDSLSSPTLLAL). Ser362 carries the post-translational modification Phosphoserine; by MAPK1, MAPK3 and RPS6KA3. The segment covering 362–374 (SSSNEPSSDSLSS) has biased composition (low complexity). Phosphoserine; by MAPK1 and MAPK3 is present on Ser374.

It belongs to the bZIP family. Fos subfamily. As to quaternary structure, heterodimer; with JUN. Component of the SMAD3/SMAD4/JUN/FOS complex required for synergistic TGF-beta-mediated transcription at the AP1 promoter site. Interacts with SMAD3; the interaction is weak even on TGF-beta activation. Interacts with MAFB. Interacts with TSC22D3 (via N-terminus); this interaction inhibits the binding of active AP1 to its target DNA. Interacts with CDS1 and PI4K2A, but not with CDIPT, nor PI4K2B. Interacts (via bZIP domain and leucine-zipper region) with the multiprotein chromatin-remodeling complexes SWI/SNF: SWI/SNF-A (BAF) subunits SMARCB1, SMARCC2 and SMARCD1. Interacts (via bZIP domain and leucine-zipper region) with ARID1A. Phosphorylated in the C-terminal upon stimulation by nerve growth factor (NGF) and epidermal growth factor (EGF). Phosphorylated, in vitro, by MAPK and RSK1. Phosphorylation on both Ser-362 and Ser-374 by MAPK1/2 and RSK1/2 leads to protein stabilization with phosphorylation on Ser-374 being the major site for protein stabilization on NGF stimulation. Phosphorylation on Ser-362 and Ser-374 primes further phosphorylations on Thr-325 and Thr-331 through promoting docking of MAPK to the DEF domain. Phosphorylation on Thr-232, induced by HA-RAS, activates the transcriptional activity and antagonizes sumoylation. Phosphorylation on Ser-362 by RSK2 in osteoblasts contributes to osteoblast transformation. In terms of processing, constitutively sumoylated with SUMO1, SUMO2 and SUMO3. Desumoylated by SENP2. Sumoylation requires heterodimerization with JUN and is enhanced by mitogen stimulation. Sumoylation inhibits the AP-1 transcriptional activity and is, itself, inhibited by Ras-activated phosphorylation on Thr-232. Post-translationally, in quiescent cells, the small amount of FOS present is phosphorylated at Tyr-10 and Tyr-30 by SRC. This Tyr-phosphorylated form is cytosolic. In growing cells, dephosphorylated by PTPN2. Dephosphorylation leads to the association with endoplasmic reticulum membranes and activation of phospholipid synthesis.

Its subcellular location is the nucleus. It is found in the endoplasmic reticulum. The protein localises to the cytoplasm. The protein resides in the cytosol. Its function is as follows. Nuclear phosphoprotein which forms a tight but non-covalently linked complex with the JUN/AP-1 transcription factor. On TGF-beta activation, forms a multimeric SMAD3/SMAD4/JUN/FOS complex, at the AP1/SMAD-binding site to regulate TGF-beta-mediated signaling. Has a critical function in regulating the development of cells destined to form and maintain the skeleton. It is thought to have an important role in signal transduction, cell proliferation and differentiation. In growing cells, activates phospholipid synthesis, possibly by activating CDS1 and PI4K2A. This activity requires Tyr-dephosphorylation and association with the endoplasmic reticulum. This is Protein c-Fos (Fos) from Mus musculus (Mouse).